Here is a 351-residue protein sequence, read N- to C-terminus: Biotin synthase (351 aa).

One can recognise a Radical SAM core domain in the interval 48–265 (NKVRIHILDN…LCMFRLINPD (218 aa)). [4Fe-4S] cluster-binding residues include C63, C67, and C70. 4 residues coordinate [2Fe-2S] cluster: C107, C139, C199, and R269.

Belongs to the radical SAM superfamily. Biotin synthase family. Homodimer. [4Fe-4S] cluster serves as cofactor. It depends on [2Fe-2S] cluster as a cofactor.

The enzyme catalyses (4R,5S)-dethiobiotin + (sulfur carrier)-SH + 2 reduced [2Fe-2S]-[ferredoxin] + 2 S-adenosyl-L-methionine = (sulfur carrier)-H + biotin + 2 5'-deoxyadenosine + 2 L-methionine + 2 oxidized [2Fe-2S]-[ferredoxin]. It participates in cofactor biosynthesis; biotin biosynthesis; biotin from 7,8-diaminononanoate: step 2/2. Functionally, catalyzes the conversion of dethiobiotin (DTB) to biotin by the insertion of a sulfur atom into dethiobiotin via a radical-based mechanism. This is Biotin synthase from Leptospira interrogans serogroup Icterohaemorrhagiae serovar Lai (strain 56601).